Reading from the N-terminus, the 393-residue chain is Thyrotropin-releasing hormone receptor (393 aa).

The Extracellular segment spans residues 1 to 28; sequence MENDTVSEMNQTELQPQAAVALEYQVVT. Asn-3 and Asn-10 each carry an N-linked (GlcNAc...) asparagine glycan. A helical transmembrane segment spans residues 29–51; sequence ILLVVIICGLGIVGNIMVVLVVM. The Cytoplasmic segment spans residues 52 to 61; sequence RTKHMRTPTN. A helical membrane pass occupies residues 62 to 83; sequence CYLVSLAVADLMVLVAAGLPNI. Over 84–99 the chain is Extracellular; that stretch reads TDSIYGSWVYGYVGCL. Cysteines 98 and 179 form a disulfide. The helical transmembrane segment at 100–121 threads the bilayer; that stretch reads CITYLQYLGINASSCSITAFTI. Residues 122–144 are Cytoplasmic-facing; sequence ERYIAICHPIKAQFLCTFSRAKK. The chain crosses the membrane as a helical span at residues 145-168; the sequence is IIIFVWAFTSIYCMLWFFLLDLNI. The Extracellular portion of the chain corresponds to 169 to 193; that stretch reads STYKNAVVVSCGYKISRNYYSPIYL. Residues 194 to 215 traverse the membrane as a helical segment; it reads MDFGVFYVVPMILATVLYGFIA. Residues 216–266 lie on the Cytoplasmic side of the membrane; the sequence is RILFLNPIPSDPKENSKMWKNDSIHQNKNLNLNATNRCFNSTVSSRKQVTK. Residues 267-288 traverse the membrane as a helical segment; that stretch reads MLAVVVILFALLWMPYRTLVVV. The Extracellular portion of the chain corresponds to 289–296; that stretch reads NSFLSSPF. A helical transmembrane segment spans residues 297–319; sequence QENWFLLFCRICIYLNSAINPVI. Residues 320 to 393 lie on the Cytoplasmic side of the membrane; that stretch reads YNLMSQKFRA…FDDTCLASEN (74 aa).

The protein belongs to the G-protein coupled receptor 1 family.

It localises to the cell membrane. Its function is as follows. Receptor for thyrotropin-releasing hormone (TRH). Upon ligand binding, this G-protein-coupled receptor triggers activation of the phosphatidylinositol (IP3)-calcium-protein kinase C (PKC) pathway. The protein is Thyrotropin-releasing hormone receptor (Trhr) of Mus musculus (Mouse).